The primary structure comprises 326 residues: MLTLARQQQRQNIRWLLCLSVLMLLALLLSLCAGEQWISPGDWFTPRGELFVWQIRLPRTLAVLLVGAALAISGAVMQALFENPLAEPGLLGVSNGAGVGLIAAVLLGQGQLPNWALGLCAIAGALIITLILLRFARRHLSTSRLLLAGVALGIICSALMTWAIYFSTSVDLRQLMYWMMGGFGGVDWRQSWLMLALIPVLLWICCQSRPMNMLALGEISARQLGLPMWFWRNVLVAATGWMVGVSVALAGAIGFIGLVIPHILRLCGLTDHRVLLPGCALAGASALLLADIVARLALAAAELPIGVVTATLGAPVFIWLLLKAGR.

Helical transmembrane passes span 13–35, 55–77, 90–107, 111–133, 146–168, 188–205, 242–264, 274–296, and 303–322; these read IRWLLCLSVLMLLALLLSLCAGE, IRLPRTLAVLLVGAALAISGAVM, LLGVSNGAGVGLIAAVLL, QLPNWALGLCAIAGALIITLILL, LLAGVALGIICSALMTWAIYFST, WRQSWLMLALIPVLLWIC, MVGVSVALAGAIGFIGLVIPHIL, VLLPGCALAGASALLLADIVARL, and LPIGVVTATLGAPVFIWLLL.

The protein belongs to the binding-protein-dependent transport system permease family. FecCD subfamily. In terms of assembly, the complex is composed of two ATP-binding proteins (BtuD), two transmembrane proteins (BtuC) and a solute-binding protein (BtuF).

It is found in the cell inner membrane. Part of the ABC transporter complex BtuCDF involved in vitamin B12 import. Involved in the translocation of the substrate across the membrane. The polypeptide is Vitamin B12 import system permease protein BtuC (Shigella flexneri).